A 297-amino-acid chain; its full sequence is Probable deoxyhypusine synthase (297 aa).

The active-site Nucleophile is the K265.

Belongs to the deoxyhypusine synthase family. Requires NAD(+) as cofactor.

The enzyme catalyses [eIF5A protein]-L-lysine + spermidine = [eIF5A protein]-deoxyhypusine + propane-1,3-diamine. Its pathway is protein modification; eIF5A hypusination. Its function is as follows. Catalyzes the NAD-dependent oxidative cleavage of spermidine and the subsequent transfer of the butylamine moiety of spermidine to the epsilon-amino group of a specific lysine residue of the eIF-5A precursor protein to form the intermediate deoxyhypusine residue. The chain is Probable deoxyhypusine synthase from Methanopyrus kandleri (strain AV19 / DSM 6324 / JCM 9639 / NBRC 100938).